Here is an 865-residue protein sequence, read N- to C-terminus: DNA-directed RNA polymerase subunit Rpo1N (865 aa).

Residues cysteine 60, cysteine 63, cysteine 70, histidine 73, cysteine 100, cysteine 103, cysteine 146, and cysteine 149 each coordinate Zn(2+). Residues aspartate 451, aspartate 453, and aspartate 455 each contribute to the Mg(2+) site. Positions 500 to 531 are disordered; that stretch reads EHTSSQGKRLFSVRSRPPDPQEGRAPPPDREG. Basic and acidic residues predominate over residues 515 to 531; that stretch reads RPPDPQEGRAPPPDREG.

Belongs to the RNA polymerase beta' chain family. In terms of assembly, part of the RNA polymerase complex. The cofactor is Mg(2+). Zn(2+) serves as cofactor.

It is found in the cytoplasm. The catalysed reaction is RNA(n) + a ribonucleoside 5'-triphosphate = RNA(n+1) + diphosphate. Its function is as follows. DNA-dependent RNA polymerase (RNAP) catalyzes the transcription of DNA into RNA using the four ribonucleoside triphosphates as substrates. Forms the clamp head domain. The chain is DNA-directed RNA polymerase subunit Rpo1N from Methanothermobacter thermautotrophicus (strain Winter) (Methanobacterium thermoautotrophicum).